Consider the following 326-residue polypeptide: Putative HTH-type transcriptional regulatory protein MmarC7_1702 (326 aa).

Residues 128–183 (LRETREKLKISVGELAEISRVSRKTIYKYEQNEANPSAEVAIKIEEYLDVPLIKGI) form the HTH cro/C1-type domain. A DNA-binding region (H-T-H motif) is located at residues 139–158 (VGELAEISRVSRKTIYKYEQ).

This Methanococcus maripaludis (strain C7 / ATCC BAA-1331) protein is Putative HTH-type transcriptional regulatory protein MmarC7_1702.